A 128-amino-acid chain; its full sequence is Small ribosomal subunit protein eS6 (128 aa).

It belongs to the eukaryotic ribosomal protein eS6 family.

This Thermoplasma volcanium (strain ATCC 51530 / DSM 4299 / JCM 9571 / NBRC 15438 / GSS1) protein is Small ribosomal subunit protein eS6.